The chain runs to 355 residues: Uroporphyrinogen decarboxylase (355 aa).

Substrate-binding positions include 27 to 31, D77, Y154, T209, and H328; that span reads RQAGR.

It belongs to the uroporphyrinogen decarboxylase family. Homodimer.

The protein resides in the cytoplasm. The catalysed reaction is uroporphyrinogen III + 4 H(+) = coproporphyrinogen III + 4 CO2. It participates in porphyrin-containing compound metabolism; protoporphyrin-IX biosynthesis; coproporphyrinogen-III from 5-aminolevulinate: step 4/4. Functionally, catalyzes the decarboxylation of four acetate groups of uroporphyrinogen-III to yield coproporphyrinogen-III. This is Uroporphyrinogen decarboxylase from Vibrio campbellii (strain ATCC BAA-1116).